Here is a 147-residue protein sequence, read N- to C-terminus: Transcriptional regulator MraZ (147 aa).

2 consecutive SpoVT-AbrB domains span residues 5–50 and 79–122; these read AIAL…PLSA and AQEE…SDAG.

This sequence belongs to the MraZ family. As to quaternary structure, forms oligomers.

The protein resides in the cytoplasm. Its subcellular location is the nucleoid. In Aromatoleum aromaticum (strain DSM 19018 / LMG 30748 / EbN1) (Azoarcus sp. (strain EbN1)), this protein is Transcriptional regulator MraZ.